We begin with the raw amino-acid sequence, 337 residues long: Heme A synthase (337 aa).

A run of 5 helical transmembrane segments spans residues 6–26, 87–107, 119–139, 154–174, and 192–212; these read ITKWLFVSCIMVIAMVVIGGI, FIHRLLGRMTVLIYIVPLIYF, LPYIIALLLFCVQGFMGWYMV, LAFHLIIAVIIYHILFYQLIK, and LIFSGIAITVIYVQIFLGALV. A heme-binding site is contributed by H256. The next 3 helical transmembrane spans lie at 258–278, 285–305, and 308–328; these read LGSYSVFLVVVVLVICLLTIE, IAYFLMIALLMQISTGIITLL, and VPIIIASIHQLFAIILLSIII. Residue H316 participates in heme binding.

It belongs to the COX15/CtaA family. Type 2 subfamily. As to quaternary structure, interacts with CtaB. It depends on heme b as a cofactor.

The protein localises to the cell membrane. It catalyses the reaction Fe(II)-heme o + 2 A + H2O = Fe(II)-heme a + 2 AH2. It participates in porphyrin-containing compound metabolism; heme A biosynthesis; heme A from heme O: step 1/1. Its function is as follows. Catalyzes the conversion of heme O to heme A by two successive hydroxylations of the methyl group at C8. The first hydroxylation forms heme I, the second hydroxylation results in an unstable dihydroxymethyl group, which spontaneously dehydrates, resulting in the formyl group of heme A. The protein is Heme A synthase of Rickettsia akari (strain Hartford).